The sequence spans 286 residues: 33 kDa chaperonin (286 aa).

2 disulfide bridges follow: C225/C227 and C258/C261.

It belongs to the HSP33 family. Post-translationally, under oxidizing conditions two disulfide bonds are formed involving the reactive cysteines. Under reducing conditions zinc is bound to the reactive cysteines and the protein is inactive.

The protein localises to the cytoplasm. Redox regulated molecular chaperone. Protects both thermally unfolding and oxidatively damaged proteins from irreversible aggregation. Plays an important role in the bacterial defense system toward oxidative stress. This chain is 33 kDa chaperonin, found in Shewanella oneidensis (strain ATCC 700550 / JCM 31522 / CIP 106686 / LMG 19005 / NCIMB 14063 / MR-1).